The primary structure comprises 426 residues: Glutamate-1-semialdehyde 2,1-aminomutase (426 aa).

Lys265 bears the N6-(pyridoxal phosphate)lysine mark.

It belongs to the class-III pyridoxal-phosphate-dependent aminotransferase family. HemL subfamily. As to quaternary structure, homodimer. The cofactor is pyridoxal 5'-phosphate.

The protein localises to the cytoplasm. The catalysed reaction is (S)-4-amino-5-oxopentanoate = 5-aminolevulinate. It participates in porphyrin-containing compound metabolism; protoporphyrin-IX biosynthesis; 5-aminolevulinate from L-glutamyl-tRNA(Glu): step 2/2. The protein is Glutamate-1-semialdehyde 2,1-aminomutase of Klebsiella pneumoniae subsp. pneumoniae (strain ATCC 700721 / MGH 78578).